A 217-amino-acid polypeptide reads, in one-letter code: Uracil-DNA glycosylase (217 aa).

The Proton acceptor role is filled by D62.

This sequence belongs to the uracil-DNA glycosylase (UDG) superfamily. UNG family.

Its subcellular location is the cytoplasm. The catalysed reaction is Hydrolyzes single-stranded DNA or mismatched double-stranded DNA and polynucleotides, releasing free uracil.. Functionally, excises uracil residues from the DNA which can arise as a result of misincorporation of dUMP residues by DNA polymerase or due to deamination of cytosine. The sequence is that of Uracil-DNA glycosylase from Streptococcus equi subsp. equi (strain 4047).